We begin with the raw amino-acid sequence, 477 residues long: Glycogen synthase (477 aa).

Lys15 provides a ligand contact to ADP-alpha-D-glucose.

Belongs to the glycosyltransferase 1 family. Bacterial/plant glycogen synthase subfamily.

The catalysed reaction is [(1-&gt;4)-alpha-D-glucosyl](n) + ADP-alpha-D-glucose = [(1-&gt;4)-alpha-D-glucosyl](n+1) + ADP + H(+). It participates in glycan biosynthesis; glycogen biosynthesis. Its function is as follows. Synthesizes alpha-1,4-glucan chains using ADP-glucose. The sequence is that of Glycogen synthase from Glaesserella parasuis serovar 5 (strain SH0165) (Haemophilus parasuis).